An 840-amino-acid polypeptide reads, in one-letter code: Heat shock 70 kDa protein 4 (840 aa).

N6-acetyllysine is present on Lys-53. Ser-76 bears the Phosphoserine mark. Tyr-89 and Tyr-336 each carry phosphotyrosine. Ser-393 and Ser-415 each carry phosphoserine. Lys-430 is subject to N6-acetyllysine. Residues Val-500 to Ser-575 form a disordered region. The segment covering Gln-514–Glu-533 has biased composition (basic and acidic residues). A Phosphothreonine modification is found at Thr-538. 2 positions are modified to phosphoserine: Ser-546 and Ser-647. Position 660 is a phosphotyrosine (Tyr-660). At Lys-679 the chain carries N6-acetyllysine. Position 756 is a phosphoserine (Ser-756). Lys-773 bears the N6-methyllysine mark. Residues Ile-783 to Asp-840 are disordered. Basic and acidic residues-rich tracts occupy residues Pro-788–Asn-799 and Asp-829–Asp-840.

The protein belongs to the heat shock protein 70 family. In terms of assembly, interacts with TJP1/ZO-1.

The protein localises to the cytoplasm. In Pongo abelii (Sumatran orangutan), this protein is Heat shock 70 kDa protein 4 (HSPA4).